We begin with the raw amino-acid sequence, 119 residues long: Beta-2-microglobulin (119 aa).

The N-terminal stretch at 1–20 (MSRSVALAVLALLSLSGLEA) is a signal peptide. The 90-residue stretch at 25–114 (PKIQVYSRHP…VTLSGPRTVK (90 aa)) folds into the Ig-like C1-type domain. Cys-45 and Cys-100 are disulfide-bonded.

The protein belongs to the beta-2-microglobulin family. Heterodimer of an alpha chain and a beta chain. Beta-2-microglobulin is the beta-chain of major histocompatibility complex class I molecules.

The protein localises to the secreted. Functionally, component of the class I major histocompatibility complex (MHC). Involved in the presentation of peptide antigens to the immune system. The protein is Beta-2-microglobulin (B2M) of Papio anubis (Olive baboon).